The following is an 80-amino-acid chain: Protein FAM229B (80 aa).

The disordered stretch occupies residues 1 to 44; it reads MPFRFGTQPRRFPVEGGDSSIGLEPGLSSSAACNGKEMSPTRQL.

It belongs to the FAM229 family.

This is Protein FAM229B (FAM229B) from Macaca fascicularis (Crab-eating macaque).